Reading from the N-terminus, the 175-residue chain is Rubredoxin-1 (175 aa).

Rubredoxin-like domains are found at residues 1–53 (MARY…FVLI) and 119–170 (FLKW…YVLY). Fe cation contacts are provided by Cys6, Cys9, Cys39, Cys42, Cys124, Cys127, Cys157, and Cys160.

It belongs to the rubredoxin family. Requires Fe(3+) as cofactor.

The protein resides in the cytoplasm. The protein operates within hydrocarbon metabolism; alkane degradation. In terms of biological role, involved in the hydrocarbon hydroxylating system, which transfers electrons from NADH to rubredoxin reductase and then through rubredoxin to alkane 1 monooxygenase. The sequence is that of Rubredoxin-1 (alkG) from Pseudomonas putida (Arthrobacter siderocapsulatus).